Reading from the N-terminus, the 297-residue chain is uncharacterized protein (297 aa).

Residues 128-156 (RGVIVEQESEAAAEKDELESLAKVLESDF) adopt a coiled-coil conformation.

This is an uncharacterized protein from Bacillus subtilis (strain 168).